The following is a 209-amino-acid chain: Probable L-serine dehydratase, alpha chain (209 aa).

It belongs to the iron-sulfur dependent L-serine dehydratase family. Heterodimer of an alpha chain and a beta chain. It depends on [4Fe-4S] cluster as a cofactor.

The catalysed reaction is L-serine = pyruvate + NH4(+). It functions in the pathway carbohydrate biosynthesis; gluconeogenesis. In Latilactobacillus sakei (Lactobacillus sakei), this protein is Probable L-serine dehydratase, alpha chain (sdhA).